The following is a 392-amino-acid chain: MTQLYPQYKKQLTTKIVLFSALSLLMMASLPNTYAEQYPDVPVPFKNGTGGKVENSLYVGLGSAGVSWFRLDTDKTGAGWQKVANFPGQPREQAVTVVLAGKLYVFGGVGKTNANDTQVRALDDAYRFDPQTNQWQQLATRAPRGLVGTVATTLDGSQAVLLGGVNKAIFDGYFTDLASAGSDEVRKSAVINAYFNQAPADYFYNRDVLIYDPQKNQWKSGGLLPFLGTAGSAISRMDNRLILINGEIKPGLRTAAVWQGLMQGNVLEWQPQPDLIGAETGSAQEGLAGAFSGISHKTVLVAGGANFPGAWKQFNRGHLYAHQGLEKQWHQQVYALVDNQWRIAGKLPQPLGYGVSIQGPDKVILIGGETTGGTATSAVTQLSWQGGKLHIE.

An N-terminal signal peptide occupies residues 1 to 35 (MTQLYPQYKKQLTTKIVLFSALSLLMMASLPNTYA). 7 Kelch repeats span residues 56 to 100 (SLYV…VVLA), 102 to 155 (KLYV…TTLD), 157 to 192 (SQAV…AVIN), 193 to 238 (AYFN…SRMD), 241 to 290 (LILI…LAGA), 312 to 361 (KQFN…QGPD), and 363 to 392 (VILI…LHIE). The active-site Proton acceptor is the glutamate 247.

This sequence belongs to the NanM family. Homodimer.

Its subcellular location is the periplasm. The enzyme catalyses N-acetyl-alpha-neuraminate = N-acetyl-beta-neuraminate. Converts alpha-N-acetylneuranimic acid (Neu5Ac) to the beta-anomer, accelerating the equilibrium between the alpha- and beta-anomers. Probably facilitates sialidase-negative bacteria to compete successfully for limited amounts of extracellular Neu5Ac, which is likely taken up in the beta-anomer. In addition, the rapid removal of sialic acid from solution might be advantageous to the bacterium to damp down host responses. The sequence is that of N-acetylneuraminate epimerase from Yersinia pseudotuberculosis serotype O:1b (strain IP 31758).